We begin with the raw amino-acid sequence, 375 residues long: Trichodiene synthase (375 aa).

Belongs to the trichodiene synthase family.

The catalysed reaction is (2E,6E)-farnesyl diphosphate = trichodiene + diphosphate. It functions in the pathway sesquiterpene biosynthesis; trichothecene biosynthesis. Its function is as follows. TS is a member of the terpene cyclase group of enzymes. It catalyzes the isomerization and cyclization of farnesyl pyro-phosphate to form trichodiene, the first cyclic intermediate in the biosynthetic pathway for trichothecenes. It serves to branch trichothecene biosynthesis from the isoprenoid pathway. In Fusarium cerealis (Fusarium crookwellense), this protein is Trichodiene synthase (TRI5).